The following is a 251-amino-acid chain: Aquaporin (251 aa).

Residues 1-11 (MAGETLRKIQS) lie on the Cytoplasmic side of the membrane. The helical transmembrane segment at 12–32 (LLGEMVASFIFGFAVYSAILG) threads the bilayer. The Extracellular segment spans residues 33–42 (STIAQQPAAK). A helical transmembrane segment spans residues 43 to 63 (VIIGLTVGFSAIGIIYSFSDV). The Cytoplasmic portion of the chain corresponds to 64–86 (TIAHFNPAITLAAILTGKMGILC). Residues 69–71 (NPA) carry the NPA motif. The helical transmembrane segment at 87 to 107 (GLGYMLAQCVGFILAVCALLV) threads the bilayer. Over 108–133 (CSPVGYKETLNVIRPAPAPFGADNLN) the chain is Extracellular. The chain crosses the membrane as a helical span at residues 134–154 (VFFTEFFLTAILVHIAFAVAV). At 155–179 (NPYRPKVDTDGKFVDPDEKEPVDRR) the chain is on the cytoplasmic side. The helical transmembrane segment at 180–200 (ITAPLCIGLTLGFLAFMGLVT) threads the bilayer. At 201–224 (SGGAFNPGLTLAPVIMSNTWQHFW) the chain is on the extracellular side. The NPG signature appears at 206-208 (NPG). The chain crosses the membrane as a helical span at residues 225 to 245 (LYLGAQYLGGLVGGLLQVFVL). Topologically, residues 246 to 251 (YKLSSN) are cytoplasmic.

It belongs to the MIP/aquaporin (TC 1.A.8) family.

The protein resides in the cell membrane. Functionally, water channel required to facilitate the transport of water across membranes. Involved in osmotolerance. The protein is Aquaporin (AQP) of Encephalitozoon hellem (Microsporidian parasite).